Reading from the N-terminus, the 335-residue chain is Glyceraldehyde-3-phosphate dehydrogenase 2 (335 aa).

NAD(+)-binding positions include 13–14 (TI) and Gly111. 140 to 142 (SCN) contributes to the D-glyceraldehyde 3-phosphate binding site. Cys141 acts as the Nucleophile in catalysis. Arg169 contacts NAD(+). D-glyceraldehyde 3-phosphate contacts are provided by residues Thr171 and 195 to 196 (HG). Gln300 contributes to the NAD(+) binding site.

The protein belongs to the glyceraldehyde-3-phosphate dehydrogenase family. As to quaternary structure, homotetramer.

The protein resides in the cytoplasm. The enzyme catalyses D-glyceraldehyde 3-phosphate + phosphate + NADP(+) = (2R)-3-phospho-glyceroyl phosphate + NADPH + H(+). It carries out the reaction D-glyceraldehyde 3-phosphate + phosphate + NAD(+) = (2R)-3-phospho-glyceroyl phosphate + NADH + H(+). Its pathway is carbohydrate degradation; glycolysis; pyruvate from D-glyceraldehyde 3-phosphate: step 1/5. The polypeptide is Glyceraldehyde-3-phosphate dehydrogenase 2 (gapB) (Methanosarcina acetivorans (strain ATCC 35395 / DSM 2834 / JCM 12185 / C2A)).